Consider the following 336-residue polypeptide: Holliday junction branch migration complex subunit RuvB (336 aa).

The tract at residues 1–182 is large ATPase domain (RuvB-L); it reads MKERIVNLET…FGMSFRMQFY (182 aa). Residues L21, R22, G63, K66, T67, S68, 129-131, R172, Y182, and R219 contribute to the ATP site; that span reads EDF. T67 lines the Mg(2+) pocket. The tract at residues 183–253 is small ATPAse domain (RuvB-S); sequence SPSELALIIK…ITLHALNELG (71 aa). Residues 256–336 are head domain (RuvB-H); it reads ELGFDEADLA…IPTLKSQTLF (81 aa). R310 and R315 together coordinate DNA.

It belongs to the RuvB family. In terms of assembly, homohexamer. Forms an RuvA(8)-RuvB(12)-Holliday junction (HJ) complex. HJ DNA is sandwiched between 2 RuvA tetramers; dsDNA enters through RuvA and exits via RuvB. An RuvB hexamer assembles on each DNA strand where it exits the tetramer. Each RuvB hexamer is contacted by two RuvA subunits (via domain III) on 2 adjacent RuvB subunits; this complex drives branch migration. In the full resolvosome a probable DNA-RuvA(4)-RuvB(12)-RuvC(2) complex forms which resolves the HJ.

It localises to the cytoplasm. It catalyses the reaction ATP + H2O = ADP + phosphate + H(+). Functionally, the RuvA-RuvB-RuvC complex processes Holliday junction (HJ) DNA during genetic recombination and DNA repair, while the RuvA-RuvB complex plays an important role in the rescue of blocked DNA replication forks via replication fork reversal (RFR). RuvA specifically binds to HJ cruciform DNA, conferring on it an open structure. The RuvB hexamer acts as an ATP-dependent pump, pulling dsDNA into and through the RuvAB complex. RuvB forms 2 homohexamers on either side of HJ DNA bound by 1 or 2 RuvA tetramers; 4 subunits per hexamer contact DNA at a time. Coordinated motions by a converter formed by DNA-disengaged RuvB subunits stimulates ATP hydrolysis and nucleotide exchange. Immobilization of the converter enables RuvB to convert the ATP-contained energy into a lever motion, pulling 2 nucleotides of DNA out of the RuvA tetramer per ATP hydrolyzed, thus driving DNA branch migration. The RuvB motors rotate together with the DNA substrate, which together with the progressing nucleotide cycle form the mechanistic basis for DNA recombination by continuous HJ branch migration. Branch migration allows RuvC to scan DNA until it finds its consensus sequence, where it cleaves and resolves cruciform DNA. This Helicobacter pylori (strain HPAG1) protein is Holliday junction branch migration complex subunit RuvB.